The primary structure comprises 125 residues: Large-conductance mechanosensitive channel (125 aa).

3 consecutive transmembrane segments (helical) span residues 19-39 (VGVI…SNLI), 42-62 (LIGI…IGSA), and 67-87 (GSFL…FLMV).

Belongs to the MscL family. As to quaternary structure, homopentamer.

The protein localises to the cell membrane. Channel that opens in response to stretch forces in the membrane lipid bilayer. May participate in the regulation of osmotic pressure changes within the cell. This is Large-conductance mechanosensitive channel from Limosilactobacillus fermentum (strain NBRC 3956 / LMG 18251) (Lactobacillus fermentum).